We begin with the raw amino-acid sequence, 106 residues long: Iron-sulfur cluster assembly protein CyaY (106 aa).

The protein belongs to the frataxin family.

In terms of biological role, involved in iron-sulfur (Fe-S) cluster assembly. May act as a regulator of Fe-S biogenesis. The chain is Iron-sulfur cluster assembly protein CyaY from Escherichia coli O127:H6 (strain E2348/69 / EPEC).